We begin with the raw amino-acid sequence, 363 residues long: D(1) dopamine receptor (363 aa).

Topologically, residues 1–24 are extracellular; that stretch reads MAVLDLNLTTVIDSGFMESDRSVR. An N-linked (GlcNAc...) asparagine glycan is attached at N7. A helical membrane pass occupies residues 25-45; sequence VLTGCFLSVLILSTLLGNTLV. Residues 46-61 are Cytoplasmic-facing; sequence CAAVTKFRHLRSKVTN. A helical transmembrane segment spans residues 62 to 81; sequence FFVISLAVSDLLVAVLVMPW. Over 82 to 98 the chain is Extracellular; it reads KAVTEVAGFWPFGAFCD. Cysteines 97 and 187 form a disulfide. Residues 99–120 form a helical membrane-spanning segment; that stretch reads IWVAFDIMCSTASILNLCVISV. Residues 121–139 are Cytoplasmic-facing; that stretch reads DRYWAISSPFRYERKMTPR. A helical membrane pass occupies residues 140 to 164; it reads VAFVMISGAWTLSVLISFIPVQLKW. At 165–194 the chain is on the extracellular side; it reads HKAQPIGFLEVNASRRDLPTDNCDSSLNRT. The chain crosses the membrane as a helical span at residues 195–219; sequence YAISSSLISFYIPVAIMIVTYTQIY. Over 220–271 the chain is Cytoplasmic; that stretch reads RIAQKQIRRISALERAAESAQIRHDSMGSGSNMDLESSFKLSFKRETKVLKT. A helical transmembrane segment spans residues 272–297; it reads LSVIMGVFVCCWLPFFILNCMVPFCK. At 298–310 the chain is on the extracellular side; it reads RTSNGLPCISPTT. A helical membrane pass occupies residues 311 to 330; sequence FDVFVWFGWANSSLNPIIYA. Topologically, residues 331-363 are cytoplasmic; sequence FNADFRRAFAILLGCQRLCPGSISMETPSLNKN. A lipid anchor (S-palmitoyl cysteine) is attached at C345.

This sequence belongs to the G-protein coupled receptor 1 family. In terms of tissue distribution, retina.

Its subcellular location is the cell membrane. It is found in the cell projection. The protein localises to the cilium membrane. Its function is as follows. Dopamine receptor whose activity is mediated by G proteins which activate adenylyl cyclase. Could be involved in growth hormone release. The chain is D(1) dopamine receptor from Carassius auratus (Goldfish).